Consider the following 428-residue polypeptide: Enolase 3 (428 aa).

Glutamine 163 serves as a coordination point for (2R)-2-phosphoglycerate. Glutamate 205 serves as the catalytic Proton donor. Mg(2+) contacts are provided by aspartate 242, glutamate 286, and aspartate 313. (2R)-2-phosphoglycerate contacts are provided by lysine 338, arginine 367, serine 368, and lysine 389. Residue lysine 338 is the Proton acceptor of the active site.

This sequence belongs to the enolase family. The cofactor is Mg(2+).

The protein localises to the cytoplasm. The protein resides in the secreted. Its subcellular location is the cell surface. It carries out the reaction (2R)-2-phosphoglycerate = phosphoenolpyruvate + H2O. Its pathway is carbohydrate degradation; glycolysis; pyruvate from D-glyceraldehyde 3-phosphate: step 4/5. Its function is as follows. Catalyzes the reversible conversion of 2-phosphoglycerate (2-PG) into phosphoenolpyruvate (PEP). It is essential for the degradation of carbohydrates via glycolysis. In Lactobacillus johnsonii (strain CNCM I-12250 / La1 / NCC 533), this protein is Enolase 3.